The following is a 446-amino-acid chain: Ribosome biogenesis protein WDR12 homolog (446 aa).

The ubiquitin-like (UBL) domain stretch occupies residues 21 to 105 (VQITFFSKDK…ETILKIECII (85 aa)). WD repeat units lie at residues 171 to 211 (KCSG…LVEK) and 216 to 255 (GHER…EATI). The disordered stretch occupies residues 256 to 275 (YEKEEEESSAKKKRKKDTRT). 4 WD repeats span residues 284 to 324 (GHRD…EVSR), 326 to 365 (KGPK…GAMV), 371 to 412 (GHQN…SSLF), and 416 to 446 (GHED…FETS).

Belongs to the WD repeat WDR12/YTM1 family.

The protein resides in the nucleus. The protein localises to the nucleolus. Its subcellular location is the nucleoplasm. Required for maturation of ribosomal RNAs and formation of the large ribosomal subunit. The polypeptide is Ribosome biogenesis protein WDR12 homolog (Caenorhabditis briggsae).